The following is a 567-amino-acid chain: Dihydroxy-acid dehydratase 1 (567 aa).

[2Fe-2S] cluster is bound at residue cysteine 57. Aspartate 89 is a Mg(2+) binding site. Cysteine 130 contacts [2Fe-2S] cluster. Mg(2+) is bound by residues aspartate 131 and lysine 132. Residue lysine 132 is modified to N6-carboxylysine. Cysteine 202 lines the [2Fe-2S] cluster pocket. Glutamate 454 contacts Mg(2+). Serine 480 serves as the catalytic Proton acceptor.

Belongs to the IlvD/Edd family. As to quaternary structure, homodimer. It depends on [2Fe-2S] cluster as a cofactor. Mg(2+) is required as a cofactor.

It catalyses the reaction (2R)-2,3-dihydroxy-3-methylbutanoate = 3-methyl-2-oxobutanoate + H2O. It carries out the reaction (2R,3R)-2,3-dihydroxy-3-methylpentanoate = (S)-3-methyl-2-oxopentanoate + H2O. It functions in the pathway amino-acid biosynthesis; L-isoleucine biosynthesis; L-isoleucine from 2-oxobutanoate: step 3/4. Its pathway is amino-acid biosynthesis; L-valine biosynthesis; L-valine from pyruvate: step 3/4. Functionally, functions in the biosynthesis of branched-chain amino acids. Catalyzes the dehydration of (2R,3R)-2,3-dihydroxy-3-methylpentanoate (2,3-dihydroxy-3-methylvalerate) into 2-oxo-3-methylpentanoate (2-oxo-3-methylvalerate) and of (2R)-2,3-dihydroxy-3-methylbutanoate (2,3-dihydroxyisovalerate) into 2-oxo-3-methylbutanoate (2-oxoisovalerate), the penultimate precursor to L-isoleucine and L-valine, respectively. This chain is Dihydroxy-acid dehydratase 1, found in Aromatoleum aromaticum (strain DSM 19018 / LMG 30748 / EbN1) (Azoarcus sp. (strain EbN1)).